Here is a 369-residue protein sequence, read N- to C-terminus: N-methyltransferase imqF (369 aa).

Belongs to the methyltransferase superfamily.

It functions in the pathway secondary metabolite biosynthesis. N-methyltransferase; part of the gene cluster that mediates the biosynthesis of imizoquins A to D, tripeptide-derived alkaloids that serve a protective role against oxidative stress that are essential for normal germination. ImqB is a canonical three-module NRPS that assembles the tripeptide backbone of the imizoquins via condensation of Trp, Tyr, and Leu-derived precursors. N-methylation by imqF and phenol oxidation by imqC, followed by cyclization via the FAD-dependent oxidase imqH carry out the three-step transformation of L-tyrosine into tetrahydroisoquinoline. Importantly, this sequence requires the presence of a free amine in the tyrosine moiety, indicating that isoquinoline formation occurs prior to peptide bond formation. The imidazolidin-4-one ring of imizoquins could form following additional oxidation of the methyl-derived bridgehead carbon by imqH. Lastly, O-methylation by imqG and leucine hydroxylation by imqE complete biosynthesis of the imizoquins. The polypeptide is N-methyltransferase imqF (Aspergillus flavus (strain ATCC 200026 / FGSC A1120 / IAM 13836 / NRRL 3357 / JCM 12722 / SRRC 167)).